The following is a 231-amino-acid chain: Protein APE_1056.1 (231 aa).

Residues valine 29–arginine 214 enclose the AMMECR1 domain.

The chain is Protein APE_1056.1 from Aeropyrum pernix (strain ATCC 700893 / DSM 11879 / JCM 9820 / NBRC 100138 / K1).